We begin with the raw amino-acid sequence, 660 residues long: Acetyl-coenzyme A synthetase (660 aa).

Residues Arg-197 to Lys-200 and Thr-317 each bind CoA. ATP contacts are provided by residues Gly-397–Pro-399, Asp-421–Thr-426, Asp-512, and Arg-528. Ser-536 contributes to the CoA binding site. Arg-539 serves as a coordination point for ATP. Mg(2+) contacts are provided by Val-550 and Val-555. Lys-625 bears the N6-acetyllysine mark.

Belongs to the ATP-dependent AMP-binding enzyme family. The cofactor is Mg(2+). Post-translationally, acetylated. Deacetylation by the SIR2-homolog deacetylase activates the enzyme.

It carries out the reaction acetate + ATP + CoA = acetyl-CoA + AMP + diphosphate. It participates in ketone degradation; acetoin degradation. Catalyzes the conversion of acetate into acetyl-CoA (AcCoA), an essential intermediate at the junction of anabolic and catabolic pathways. AcsA undergoes a two-step reaction. In the first half reaction, AcsA combines acetate with ATP to form acetyl-adenylate (AcAMP) intermediate. In the second half reaction, it can then transfer the acetyl group from AcAMP to the sulfhydryl group of CoA, forming the product AcCoA. Although acetate is the preferred substrate of AcsA, propionate is also used, but at a diminished rate compared with that of acetate. Fatty acids with more than three carbon atoms are usually not accepted as substrates by AcsA. This is Acetyl-coenzyme A synthetase from Cupriavidus necator (strain ATCC 17699 / DSM 428 / KCTC 22496 / NCIMB 10442 / H16 / Stanier 337) (Ralstonia eutropha).